The following is a 176-amino-acid chain: Ferredoxin-type protein NapF (176 aa).

2 4Fe-4S ferredoxin-type domains span residues 39–68 and 71–100; these read VENSIFVARCTRCGDCLSVCETNILVKGDA and PEVRFDNGECTFCGKCVDACKQPIFYPRDQ. [4Fe-4S] cluster contacts are provided by cysteine 48, cysteine 51, cysteine 54, cysteine 58, cysteine 80, cysteine 83, cysteine 86, cysteine 90, cysteine 113, cysteine 121, cysteine 124, cysteine 128, cysteine 152, cysteine 155, cysteine 158, and cysteine 162. 2 consecutive 4Fe-4S ferredoxin-type domains span residues 119–138 and 143–172; these read IECRTCQDNCPANAIRFKLQ and AQPLVNFDACNGCGACVQGCPVNAITMNDL.

The protein belongs to the NapF family. In terms of assembly, interacts with the cytoplasmic NapA precursor. The cofactor is [4Fe-4S] cluster.

The protein localises to the cytoplasm. Functionally, could be involved in the maturation of NapA, the catalytic subunit of the periplasmic nitrate reductase, before its export into the periplasm. The protein is Ferredoxin-type protein NapF of Haemophilus influenzae (strain ATCC 51907 / DSM 11121 / KW20 / Rd).